The sequence spans 1313 residues: Inter-alpha-trypsin inhibitor heavy chain H6 (1313 aa).

The signal sequence occupies residues 1–23; the sequence is MSGWRYLICVSFLLTILLELTYQ. The 127-residue stretch at 24–150 folds into the VIT domain; sequence GPPVPASSST…EVTFSLAYEE (127 aa). Residues asparagine 83, asparagine 374, asparagine 540, and asparagine 594 are each glycosylated (N-linked (GlcNAc...) asparagine). Residues 283–469 enclose the VWFA domain; the sequence is NVVFVIDVSS…LQLKGLYEEI (187 aa). 4 disordered regions span residues 612–644, 783–817, 856–928, and 959–983; these read QPKQ…HGLG, HSKP…TLQV, LKPS…EPLP, and PSRP…SPPN. The segment covering 623–640 has biased composition (polar residues); that stretch reads QTSTSAGPDTIMPSSSSR. The span at 864 to 875 shows a compositional bias: polar residues; the sequence is QISTSISLSKPE. Residues 876–888 show a composition bias toward pro residues; that stretch reads TPNPHMPQTPLPP. Over residues 907–921 the composition is skewed to low complexity; sequence TISSSTGPSSTTTTS. N-linked (GlcNAc...) asparagine glycans are attached at residues asparagine 971 and asparagine 1231.

This sequence belongs to the ITIH family.

It is found in the secreted. This Homo sapiens (Human) protein is Inter-alpha-trypsin inhibitor heavy chain H6 (ITIH6).